We begin with the raw amino-acid sequence, 304 residues long: tRNA pseudouridine synthase B (304 aa).

Catalysis depends on Asp-38, which acts as the Nucleophile.

This sequence belongs to the pseudouridine synthase TruB family. Type 1 subfamily.

It carries out the reaction uridine(55) in tRNA = pseudouridine(55) in tRNA. Functionally, responsible for synthesis of pseudouridine from uracil-55 in the psi GC loop of transfer RNAs. This chain is tRNA pseudouridine synthase B, found in Listeria monocytogenes serotype 4b (strain F2365).